We begin with the raw amino-acid sequence, 113 residues long: Transcriptional activator RamA (113 aa).

The 99-residue stretch at 9 to 107 folds into the HTH araC/xylS-type domain; that stretch reads DTIVEWIDDN…HQPPGAYRKE (99 aa). 2 DNA-binding regions (H-T-H motif) span residues 26–47 and 74–97; these read EDIARHAGYSKWHLQRLFLQYK and VYEICLRYGFESQQTFTRIFTRTF.

Probable transcriptional activator. The polypeptide is Transcriptional activator RamA (ramA) (Enterobacter cloacae).